Reading from the N-terminus, the 169-residue chain is MIVLHARDCDPKACTALRAHRMGLVELTRHPGDVPTGAVVLDPTVEKALSREDRDAALERGLVAVDCSWEHVHRYFGPLRRRCRHRILPYLIAANPVNYGKPCKLSTVEALAAALYILGFRREAEEFISRFKWGPAFLELNRERLEAYRRAETSAEVVRVQEEFLPDGL.

S-adenosyl-L-methionine is bound by residues Thr-15, Val-65, Leu-88, and Thr-107.

The protein belongs to the TDD superfamily. TSR3 family.

It is found in the cytoplasm. It carries out the reaction an N(1)-methylpseudouridine in rRNA + S-adenosyl-L-methionine = N(1)-methyl-N(3)-[(3S)-3-amino-3-carboxypropyl]pseudouridine in rRNA + S-methyl-5'-thioadenosine + H(+). In terms of biological role, aminocarboxypropyltransferase that catalyzes the aminocarboxypropyl transfer on pseudouridine corresponding to position 914 in M.jannaschii 16S rRNA. It constitutes the last step in biosynthesis of the hypermodified N1-methyl-N3-(3-amino-3-carboxypropyl) pseudouridine (m1acp3-Psi). This Methanopyrus kandleri (strain AV19 / DSM 6324 / JCM 9639 / NBRC 100938) protein is 16S rRNA aminocarboxypropyltransferase.